A 151-amino-acid chain; its full sequence is MAKLQVSLKARALRYLSAREHSRQELARKLARYAQEGDDIEALLDTLEAANFMSEARFSESLVNRRAARFGNSRILSELKSHNIDPDSLTEIKAALAQDEVARAREVWTRKFGVAASDANGRAKQMRFLLQRGFSHRAIQAAMRAKEENED.

This sequence belongs to the RecX family.

It localises to the cytoplasm. In terms of biological role, modulates RecA activity. This is Regulatory protein RecX from Herminiimonas arsenicoxydans.